The following is a 312-amino-acid chain: Formimidoylglutamase (312 aa).

Residues His-123, Asp-152, His-154, Asp-156, Cys-243, and Asp-245 each coordinate Mn(2+).

The protein belongs to the arginase family. The cofactor is Mn(2+).

The catalysed reaction is N-formimidoyl-L-glutamate + H2O = formamide + L-glutamate. The protein operates within amino-acid degradation; L-histidine degradation into L-glutamate; L-glutamate from N-formimidoyl-L-glutamate (hydrolase route): step 1/1. Catalyzes the conversion of N-formimidoyl-L-glutamate to L-glutamate and formamide. This Pseudomonas fluorescens (strain ATCC BAA-477 / NRRL B-23932 / Pf-5) protein is Formimidoylglutamase.